The primary structure comprises 127 residues: Large ribosomal subunit protein bL17 (127 aa).

This sequence belongs to the bacterial ribosomal protein bL17 family. Part of the 50S ribosomal subunit. Contacts protein L32.

The protein is Large ribosomal subunit protein bL17 of Photobacterium profundum (strain SS9).